The following is a 201-amino-acid chain: Phosphoheptose isomerase (201 aa).

The region spanning 36 to 195 (IAKSLNEGGK…EDILFEIPAA (160 aa)) is the SIS domain. Residue 51–53 (NGG) coordinates substrate. Residues His-60 and Glu-64 each coordinate Zn(2+). Residues Glu-64, 93-94 (ND), 119-121 (STS), Ser-124, and Gln-171 each bind substrate. Residues Gln-171 and His-179 each coordinate Zn(2+).

The protein belongs to the SIS family. GmhA subfamily. Zn(2+) serves as cofactor.

It localises to the cytoplasm. The enzyme catalyses 2 D-sedoheptulose 7-phosphate = D-glycero-alpha-D-manno-heptose 7-phosphate + D-glycero-beta-D-manno-heptose 7-phosphate. It participates in carbohydrate biosynthesis; D-glycero-D-manno-heptose 7-phosphate biosynthesis; D-glycero-alpha-D-manno-heptose 7-phosphate and D-glycero-beta-D-manno-heptose 7-phosphate from sedoheptulose 7-phosphate: step 1/1. In terms of biological role, catalyzes the isomerization of sedoheptulose 7-phosphate in D-glycero-D-manno-heptose 7-phosphate. The polypeptide is Phosphoheptose isomerase (Thermodesulfovibrio yellowstonii (strain ATCC 51303 / DSM 11347 / YP87)).